A 209-amino-acid chain; its full sequence is Glycerol-3-phosphate acyltransferase (209 aa).

5 consecutive transmembrane segments (helical) span residues 7–27, 85–105, 117–137, 142–162, and 166–183; these read IELA…AIIV, AIIL…FFGF, VMFG…LFVA, ISSL…YLLA, and MAWV…FWRH.

The protein belongs to the PlsY family. In terms of assembly, probably interacts with PlsX.

It localises to the cell inner membrane. The catalysed reaction is an acyl phosphate + sn-glycerol 3-phosphate = a 1-acyl-sn-glycero-3-phosphate + phosphate. Its pathway is lipid metabolism; phospholipid metabolism. Its function is as follows. Catalyzes the transfer of an acyl group from acyl-phosphate (acyl-PO(4)) to glycerol-3-phosphate (G3P) to form lysophosphatidic acid (LPA). This enzyme utilizes acyl-phosphate as fatty acyl donor, but not acyl-CoA or acyl-ACP. The chain is Glycerol-3-phosphate acyltransferase from Hydrogenovibrio crunogenus (strain DSM 25203 / XCL-2) (Thiomicrospira crunogena).